Here is a 203-residue protein sequence, read N- to C-terminus: Orotate phosphoribosyltransferase (203 aa).

Residues R94, K98, H100, and 120 to 128 (EDLISTGGS) contribute to the 5-phospho-alpha-D-ribose 1-diphosphate site. S124 provides a ligand contact to orotate.

Belongs to the purine/pyrimidine phosphoribosyltransferase family. PyrE subfamily. Homodimer. Mg(2+) serves as cofactor.

It carries out the reaction orotidine 5'-phosphate + diphosphate = orotate + 5-phospho-alpha-D-ribose 1-diphosphate. The protein operates within pyrimidine metabolism; UMP biosynthesis via de novo pathway; UMP from orotate: step 1/2. In terms of biological role, catalyzes the transfer of a ribosyl phosphate group from 5-phosphoribose 1-diphosphate to orotate, leading to the formation of orotidine monophosphate (OMP). The protein is Orotate phosphoribosyltransferase of Staphylococcus aureus (strain Mu50 / ATCC 700699).